Reading from the N-terminus, the 255-residue chain is Small ribosomal subunit protein eS1 (255 aa).

Residues 1 to 18 (MAVGKNKRLSKGKKGLKK) are compositionally biased toward basic residues. Residues 1–28 (MAVGKNKRLSKGKKGLKKRTQDPFSRKD) are disordered. At A2 the chain carries N-acetylalanine; partial. The segment covering 19–28 (RTQDPFSRKD) has biased composition (basic and acidic residues).

The protein belongs to the eukaryotic ribosomal protein eS1 family. In terms of assembly, component of the small ribosomal subunit. Mature ribosomes consist of a small (40S) and a large (60S) subunit. The 40S subunit contains about 33 different proteins and 1 molecule of RNA (18S). The 60S subunit contains about 49 different proteins and 3 molecules of RNA (25S, 5.8S and 5S).

The protein resides in the cytoplasm. In Paracoccidioides lutzii (strain ATCC MYA-826 / Pb01) (Paracoccidioides brasiliensis), this protein is Small ribosomal subunit protein eS1.